The chain runs to 318 residues: Pantothenate kinase (318 aa).

ATP is bound at residue 96–103 (GSVAVGKS).

Belongs to the prokaryotic pantothenate kinase family.

It localises to the cytoplasm. It catalyses the reaction (R)-pantothenate + ATP = (R)-4'-phosphopantothenate + ADP + H(+). It functions in the pathway cofactor biosynthesis; coenzyme A biosynthesis; CoA from (R)-pantothenate: step 1/5. This Coxiella burnetii (strain Dugway 5J108-111) protein is Pantothenate kinase.